A 137-amino-acid polypeptide reads, in one-letter code: Proofreading thioesterase EntH (137 aa).

E63 acts as the Nucleophile or proton acceptor in catalysis.

The protein belongs to the thioesterase PaaI family. In terms of assembly, homotetramer. Dimer of dimers. Interacts specifically with the aryl carrier protein (ArCP) domain of EntB.

It localises to the cytoplasm. It participates in siderophore biosynthesis; enterobactin biosynthesis. Its function is as follows. Required for optimal enterobactin synthesis. Acts as a proofreading enzyme that prevents EntB misacylation by hydrolyzing the thioester bound existing between EntB and wrongly charged molecules. This Salmonella typhimurium (strain LT2 / SGSC1412 / ATCC 700720) protein is Proofreading thioesterase EntH.